The following is a 91-amino-acid chain: DNA-directed RNA polymerase subunit omega (91 aa).

Belongs to the RNA polymerase subunit omega family. As to quaternary structure, the RNAP catalytic core consists of 2 alpha, 1 beta, 1 beta' and 1 omega subunit. When a sigma factor is associated with the core the holoenzyme is formed, which can initiate transcription.

The enzyme catalyses RNA(n) + a ribonucleoside 5'-triphosphate = RNA(n+1) + diphosphate. Its function is as follows. Promotes RNA polymerase assembly. Latches the N- and C-terminal regions of the beta' subunit thereby facilitating its interaction with the beta and alpha subunits. This chain is DNA-directed RNA polymerase subunit omega, found in Enterobacter sp. (strain 638).